The primary structure comprises 36 residues: Cytochrome b6-f complex subunit 7 (36 aa).

The chain crosses the membrane as a helical span at residues 5–25 (IFFVAGLVFVLTLVGMAIGFG).

It belongs to the PetM family. As to quaternary structure, the 4 large subunits of the cytochrome b6-f complex are cytochrome b6, subunit IV (17 kDa polypeptide, PetD), cytochrome f and the Rieske protein, while the 4 small subunits are PetG, PetL, PetM and PetN. The complex functions as a dimer.

The protein localises to the cell inner membrane. Functionally, component of the cytochrome b6-f complex, which mediates electron transfer between photosystem II (PSII) and photosystem I (PSI), cyclic electron flow around PSI, and state transitions. The chain is Cytochrome b6-f complex subunit 7 from Gloeobacter violaceus (strain ATCC 29082 / PCC 7421).